Consider the following 29-residue polypeptide: Sarcolamban B (29 aa).

Residues 7-27 (LFTTFLILAFLLFLLYAFYEA) form a helical membrane-spanning segment.

In terms of assembly, interacts with SERCA. Strongly expressed in embryonic and larval somatic muscles and postembryonic heart.

It localises to the sarcoplasmic reticulum membrane. Its function is as follows. Plays an essential role in the regulation of calcium transport at the sarcoplasmic reticulum (SR), which is secondarily required for regular muscle contraction. This is Sarcolamban B from Drosophila melanogaster (Fruit fly).